The primary structure comprises 253 residues: Purine nucleoside phosphorylase DR_1966 (253 aa).

Zn(2+)-binding residues include His72, Cys106, and His123.

The protein belongs to the purine nucleoside phosphorylase YfiH/LACC1 family. In terms of assembly, homodimer. The cofactor is Cu(2+). Zn(2+) is required as a cofactor.

The catalysed reaction is adenosine + phosphate = alpha-D-ribose 1-phosphate + adenine. It catalyses the reaction S-methyl-5'-thioadenosine + phosphate = 5-(methylsulfanyl)-alpha-D-ribose 1-phosphate + adenine. The enzyme catalyses inosine + phosphate = alpha-D-ribose 1-phosphate + hypoxanthine. It carries out the reaction adenosine + H2O + H(+) = inosine + NH4(+). Its function is as follows. Purine nucleoside enzyme that catalyzes the phosphorolysis of adenosine and inosine nucleosides, yielding D-ribose 1-phosphate and the respective free bases, adenine and hypoxanthine. Also catalyzes the phosphorolysis of S-methyl-5'-thioadenosine into adenine and S-methyl-5-thio-alpha-D-ribose 1-phosphate. Also has adenosine deaminase activity. The sequence is that of Purine nucleoside phosphorylase DR_1966 from Deinococcus radiodurans (strain ATCC 13939 / DSM 20539 / JCM 16871 / CCUG 27074 / LMG 4051 / NBRC 15346 / NCIMB 9279 / VKM B-1422 / R1).